Reading from the N-terminus, the 358-residue chain is Alanine racemase (358 aa).

Lys-34 serves as the catalytic Proton acceptor; specific for D-alanine. N6-(pyridoxal phosphate)lysine is present on Lys-34. Arg-129 lines the substrate pocket. The active-site Proton acceptor; specific for L-alanine is Tyr-254. Met-302 serves as a coordination point for substrate.

The protein belongs to the alanine racemase family. Requires pyridoxal 5'-phosphate as cofactor.

It catalyses the reaction L-alanine = D-alanine. It participates in amino-acid biosynthesis; D-alanine biosynthesis; D-alanine from L-alanine: step 1/1. In terms of biological role, catalyzes the interconversion of L-alanine and D-alanine. May also act on other amino acids. The polypeptide is Alanine racemase (alr) (Aliivibrio salmonicida (strain LFI1238) (Vibrio salmonicida (strain LFI1238))).